A 610-amino-acid chain; its full sequence is ATP-dependent RNA helicase HAS1 (610 aa).

2 disordered regions span residues 1 to 81 and 112 to 131; these read MTAA…AELK and ALAVADLPSGTSIPTVDDPT. Over residues 9-18 the composition is skewed to basic residues; sequence KKRKRKHKAK. Over residues 51-76 the composition is skewed to acidic residues; that stretch reads PEVEDVVADASENDVESGAEEDEEQV. The short motif at 131–159 is the Q motif element; that stretch reads TRFDELNLSERTMEAIKTMGFESMTEIQR. The Helicase ATP-binding domain maps to 162-337; the sequence is IPPLLSGKDV…RISLKAGPLY (176 aa). 175-182 serves as a coordination point for ATP; that stretch reads AKTGSGKT. The short motif at 285 to 288 is the DEAD box element; that stretch reads DEAD. The Helicase C-terminal domain occupies 351–521; that stretch reads GLEQGYVICD…NIQSQLEALI (171 aa). Positions 584–594 are enriched in basic and acidic residues; sequence DKKVEGRREYG. Residues 584–610 form a disordered region; the sequence is DKKVEGRREYGRQPQQGRRPMKPNKRF.

The protein belongs to the DEAD box helicase family. DDX18/HAS1 subfamily. Associates in the nucleolus with the 60S and pre-60S ribosomal subunits.

Its subcellular location is the nucleus. It is found in the nucleolus. It catalyses the reaction ATP + H2O = ADP + phosphate + H(+). Its function is as follows. ATP-dependent RNA helicase involved in 40S ribosomal subunit biogenesis. Required for the processing and cleavage of 35S pre-rRNA at sites A0, A1, and A2, leading to mature 18S rRNA. This is ATP-dependent RNA helicase HAS1 (HAS1) from Phaeosphaeria nodorum (strain SN15 / ATCC MYA-4574 / FGSC 10173) (Glume blotch fungus).